We begin with the raw amino-acid sequence, 102 residues long: UPF0235 protein Noc_3000 (102 aa).

It belongs to the UPF0235 family.

The polypeptide is UPF0235 protein Noc_3000 (Nitrosococcus oceani (strain ATCC 19707 / BCRC 17464 / JCM 30415 / NCIMB 11848 / C-107)).